The following is a 389-amino-acid chain: Oxysterol-binding protein 1 (389 aa).

Coiled coils occupy residues Met1 to Ala31 and Lys340 to Lys371. Residues Met1 to Asp43 are disordered.

It belongs to the OSBP family. Interacts with dstC.

It localises to the cytoplasm. In terms of biological role, may play a role in the regulation of the slug-fruiting body switch. In Dictyostelium discoideum (Social amoeba), this protein is Oxysterol-binding protein 1 (osbA).